Reading from the N-terminus, the 438-residue chain is Trigger factor (438 aa).

The 86-residue stretch at 163–248 folds into the PPIase FKBP-type domain; that stretch reads GEIAVLDFAA…VHAVKERKLP (86 aa).

This sequence belongs to the FKBP-type PPIase family. Tig subfamily.

It localises to the cytoplasm. It catalyses the reaction [protein]-peptidylproline (omega=180) = [protein]-peptidylproline (omega=0). Its function is as follows. Involved in protein export. Acts as a chaperone by maintaining the newly synthesized protein in an open conformation. Functions as a peptidyl-prolyl cis-trans isomerase. The sequence is that of Trigger factor from Oleidesulfovibrio alaskensis (strain ATCC BAA-1058 / DSM 17464 / G20) (Desulfovibrio alaskensis).